The primary structure comprises 132 residues: Small ribosomal subunit protein uS8c (132 aa).

This sequence belongs to the universal ribosomal protein uS8 family. In terms of assembly, part of the 30S ribosomal subunit.

It localises to the plastid. The protein resides in the chloroplast. Functionally, one of the primary rRNA binding proteins, it binds directly to 16S rRNA central domain where it helps coordinate assembly of the platform of the 30S subunit. The sequence is that of Small ribosomal subunit protein uS8c (rps8) from Cycas taitungensis (Prince sago).